A 311-amino-acid chain; its full sequence is Class E basic helix-loop-helix protein 22 (311 aa).

A disordered region spans residues 22–170 (AKRMESAFRS…GGSKKSKEQK (149 aa)). Low complexity predominate over residues 81–96 (GESASRSSVAESSGGE). Over residues 125–147 (AGGGGGGGGGGGGGPGGGGGGGL) the composition is skewed to gly residues. Positions 171-225 (ALRLNINARERRRMHDLNDALDELRAVIPYAHSPSVRKLSKIATLLLAKNYILMQ) constitute a bHLH domain.

It is found in the nucleus. May act as a transcriptional repressor. This is Class E basic helix-loop-helix protein 22 (BHLHE22) from Gallus gallus (Chicken).